Consider the following 490-residue polypeptide: MANYFNTLPLREQLAQLAQCEFMNADEFTDGVDALKGKKLVIVGCGAQGLNQGLNLRDSGLDVSYTLRDSAISERRQSFLNASENGFTVGTYQELIPTADVVLNLTPDKQHTSVVNAIMPLMKQGSTLAYSHGFNIVEEGMQVRDDITVIMVAPKCPGSEVREEYKRGFGVPTLIAVHPENDPQGHGLAQAKAYAAGTGGHRAGVLKSSFIAEVKSDLMGEQTILCGMLQTGSILCFDKMIEKGIDAGYASKLIQYGWEVITEALKYGGVTNMLDRLSNPAKVKAFELSEELKQIMRPLYNKHQDDIIDGTFSRTMMEDWNNDDANLLKWRAETAETHFEKTPAGNVEIAEQEFFDNGILMVAMVKAGVELAFETMTAAGIIAESAYYESLHETPLIANTIARKKLFEMNRTISDTAEYGCYLYNHACLPLLQDFMQKIDTDVIGKGLGEHSNQVDNQTLIQINTALREHPVEKVGATLRGYMSAMKKIV.

The KARI N-terminal Rossmann domain maps to 17 to 208 (LAQCEFMNAD…GGHRAGVLKS (192 aa)). NADP(+) is bound by residues 45–48 (CGAQ), Arg-68, Arg-76, Ser-78, and 108–110 (DKQ). His-132 is a catalytic residue. NADP(+) is bound at residue Gly-158. 2 consecutive KARI C-terminal knotted domains span residues 209–353 (SFIA…AEQE) and 355–486 (FDNG…MSAM). Positions 217, 221, 389, and 393 each coordinate Mg(2+). Ser-414 serves as a coordination point for substrate.

Belongs to the ketol-acid reductoisomerase family. It depends on Mg(2+) as a cofactor.

The catalysed reaction is (2R)-2,3-dihydroxy-3-methylbutanoate + NADP(+) = (2S)-2-acetolactate + NADPH + H(+). It carries out the reaction (2R,3R)-2,3-dihydroxy-3-methylpentanoate + NADP(+) = (S)-2-ethyl-2-hydroxy-3-oxobutanoate + NADPH + H(+). Its pathway is amino-acid biosynthesis; L-isoleucine biosynthesis; L-isoleucine from 2-oxobutanoate: step 2/4. The protein operates within amino-acid biosynthesis; L-valine biosynthesis; L-valine from pyruvate: step 2/4. Its function is as follows. Involved in the biosynthesis of branched-chain amino acids (BCAA). Catalyzes an alkyl-migration followed by a ketol-acid reduction of (S)-2-acetolactate (S2AL) to yield (R)-2,3-dihydroxy-isovalerate. In the isomerase reaction, S2AL is rearranged via a Mg-dependent methyl migration to produce 3-hydroxy-3-methyl-2-ketobutyrate (HMKB). In the reductase reaction, this 2-ketoacid undergoes a metal-dependent reduction by NADPH to yield (R)-2,3-dihydroxy-isovalerate. This Pseudoalteromonas translucida (strain TAC 125) protein is Ketol-acid reductoisomerase (NADP(+)).